We begin with the raw amino-acid sequence, 276 residues long: Adenylate kinase (276 aa).

38–43 (GSGKGT) contributes to the ATP binding site. Positions 58–87 (STGDMLRAAIEQGTETGKQAKTIMDQGGLV) are NMP. Residues T59, R64, 85-87 (GLV), 113-116 (GFPR), and Q120 contribute to the AMP site. The LID stretch occupies residues 154-191 (GRLVHPSSGRSYHREFFPPKVDMIDDITGEPLIQRSDD). ATP contacts are provided by residues R155 and 164–165 (SY). The AMP site is built by R188 and R199. K227 serves as a coordination point for ATP.

Belongs to the adenylate kinase family. AK2 subfamily. As to quaternary structure, monomer.

It is found in the cytoplasm. Its subcellular location is the cytosol. The protein resides in the mitochondrion intermembrane space. It carries out the reaction AMP + ATP = 2 ADP. In terms of biological role, catalyzes the reversible transfer of the terminal phosphate group between ATP and AMP. Plays an important role in cellular energy homeostasis and in adenine nucleotide metabolism. Adenylate kinase activity is critical for regulation of the phosphate utilization and the AMP de novo biosynthesis pathways. In Dictyostelium discoideum (Social amoeba), this protein is Adenylate kinase (adkA).